A 397-amino-acid polypeptide reads, in one-letter code: Cysteine protease ATG4A (397 aa).

The active-site Nucleophile is cysteine 79. Residues aspartate 279 and histidine 281 contribute to the active site. The LIR motif lies at phenylalanine 392 to leucine 395.

This sequence belongs to the peptidase C54 family.

The protein localises to the cytoplasm. It carries out the reaction [protein]-C-terminal L-amino acid-glycyl-phosphatidylethanolamide + H2O = [protein]-C-terminal L-amino acid-glycine + a 1,2-diacyl-sn-glycero-3-phosphoethanolamine. In terms of biological role, cysteine protease that plays a key role in autophagy by mediating both proteolytic activation and delipidation of ATG8 family proteins. The protease activity is required for proteolytic activation of ATG8 family proteins: cleaves the C-terminal amino acid of ATG8 proteins to reveal a C-terminal glycine. Exposure of the glycine at the C-terminus is essential for ATG8 proteins conjugation to phosphatidylethanolamine (PE) and insertion to membranes, which is necessary for autophagy. Protease activity is also required to counteract formation of high-molecular weight conjugates of ATG8 proteins (ATG8ylation): acts as a deubiquitinating-like enzyme that removes ATG8 conjugated to other proteins, such as ATG3. In addition to the protease activity, also mediates delipidation of ATG8 family proteins. Catalyzes delipidation of PE-conjugated forms of ATG8 proteins during macroautophagy. The polypeptide is Cysteine protease ATG4A (Xenopus laevis (African clawed frog)).